A 604-amino-acid chain; its full sequence is Ras guanine nucleotide exchange factor H (604 aa).

The span at 1 to 26 (MSNTNINVQSSTPKKSLGSSQYSLAG) shows a compositional bias: polar residues. Residues 1-61 (MSNTNINVQS…QENSIDDSGS (61 aa)) are disordered. Residues 27–49 (SSSSNLNNINNNNNNNNNNNNNS) show a composition bias toward low complexity. Positions 50-61 (TGQENSIDDSGS) are enriched in polar residues. In terms of domain architecture, LisH spans 115-147 (NDTMLLKLIMQYFHEENLTTSLKKIQEETKVQF). The N-terminal Ras-GEF domain occupies 221 to 335 (PDGTIKAATF…AVINLKIENY (115 aa)). Residues 365 to 591 (DEEEIARQLC…EQPQLTLDLS (227 aa)) form the Ras-GEF domain.

In terms of assembly, component of the Sca1 complex composed of at least gefA, gefH, scaA, phr, and the protein phosphatase 2A subunits pppA and pho2B. Interacts directly with gefA and phr.

It localises to the cell membrane. Promotes the exchange of Ras-bound GDP by GTP. Component of the Sca1 complex, a regulator of cell motility, chemotaxis and signal relay. The Sca1 complex is recruited to the plasma membrane in a chemoattractant- and F-actin-dependent manner and is enriched at the leading edge of chemotaxing cells where it regulates F-actin dynamics and signal relay by controlling the activation of rasC and the downstream target of rapamycin complex 2 (TORC2)-Akt/protein kinase B (PKB) pathway. The sequence is that of Ras guanine nucleotide exchange factor H (gefH) from Dictyostelium discoideum (Social amoeba).